A 300-amino-acid polypeptide reads, in one-letter code: Probable lipid kinase YegS-like (300 aa).

Positions Met1–Tyr129 constitute a DAGKc domain. Residues Thr38, Gly64 to Asp70, and Thr92 each bind ATP. Mg(2+) is bound by residues Leu210, Asp213, and Leu215. Glu272 serves as the catalytic Proton acceptor.

The protein belongs to the diacylglycerol/lipid kinase family. YegS lipid kinase subfamily. Mg(2+) serves as cofactor. It depends on Ca(2+) as a cofactor.

The protein resides in the cytoplasm. Probably phosphorylates lipids; the in vivo substrate is unknown. In Alcanivorax borkumensis (strain ATCC 700651 / DSM 11573 / NCIMB 13689 / SK2), this protein is Probable lipid kinase YegS-like.